The following is a 443-amino-acid chain: Putative cytochrome bd menaquinol oxidase subunit I (443 aa).

Transmembrane regions (helical) follow at residues 19-39 (IIFA…ELIY), 60-80 (VLLG…ALLW), 93-113 (LPFQ…SIYV), 125-145 (IVAV…ITNV), 176-196 (FFIT…FIVA), 219-239 (ALLL…LNGH), 322-342 (LFNA…IGVV), 357-377 (LIIF…GWIF), and 405-425 (VLFL…VYVL). His-182 is a heme b binding site.

It belongs to the cytochrome ubiquinol oxidase subunit 1 family. The cofactor is heme b.

Its subcellular location is the cell membrane. In terms of biological role, may have a role in sporulation. Can compensate for the loss of cytochrome aa3. This chain is Putative cytochrome bd menaquinol oxidase subunit I (ythA), found in Bacillus subtilis (strain 168).